Here is a 540-residue protein sequence, read N- to C-terminus: Probable ATP-dependent RNA helicase DDX28 (540 aa).

A Mitochondrial targeting signal motif is present at residues 3–18; it reads LAGPSRLLALAVRLLL. The Q motif motif lies at 126 to 156; the sequence is GSFVDLGLEPRVLLALQEAVPEVVQPTSVQS. Residues 159 to 351 form the Helicase ATP-binding domain; the sequence is IPPLLRGRHL…SKVTSPDSLT (193 aa). ATP is bound at residue 172–179; it reads AETGSGKT. Positions 180-191 match the Nuclear export signal motif; the sequence is LSYLLPLFQRLL. The short motif at 286–289 is the DEAD element; it reads DEVD. The Helicase C-terminal domain maps to 377–536; the sequence is KVTELVQILK…GLASSVGDPL (160 aa). Positions 520–523 match the Nuclear localization signal motif; that stretch reads RRRR.

The protein belongs to the DEAD box helicase family. In terms of assembly, monomer. Found in a complex with GRSF1, DHX30, FASTKD2 and FASTKD5. Associates with the 16S mitochondrial rRNA (16S mt-rRNA) and with the mitochondrial ribosome large subunit (39S).

It is found in the nucleus. Its subcellular location is the mitochondrion. The protein localises to the mitochondrion matrix. The protein resides in the mitochondrion nucleoid. It catalyses the reaction ATP + H2O = ADP + phosphate + H(+). Functionally, plays an essential role in facilitating the proper assembly of the mitochondrial large ribosomal subunit and its helicase activity is essential for this function. May be involved in RNA processing or transport. Has RNA and Mg(2+)-dependent ATPase activity. In Mus musculus (Mouse), this protein is Probable ATP-dependent RNA helicase DDX28 (Ddx28).